The following is a 225-amino-acid chain: 7-cyano-7-deazaguanine synthase (225 aa).

An ATP-binding site is contributed by 9 to 19 (LSGGLDSATCL). Zn(2+) is bound by residues Cys-189, Cys-199, Cys-202, and Cys-205.

This sequence belongs to the QueC family. Requires Zn(2+) as cofactor.

The enzyme catalyses 7-carboxy-7-deazaguanine + NH4(+) + ATP = 7-cyano-7-deazaguanine + ADP + phosphate + H2O + H(+). Its pathway is purine metabolism; 7-cyano-7-deazaguanine biosynthesis. Functionally, catalyzes the ATP-dependent conversion of 7-carboxy-7-deazaguanine (CDG) to 7-cyano-7-deazaguanine (preQ(0)). This Dechloromonas aromatica (strain RCB) protein is 7-cyano-7-deazaguanine synthase.